The sequence spans 81 residues: Large ribosomal subunit protein bL27 (81 aa).

The disordered stretch occupies residues 1–22; sequence MAHKTGQSSSSNGRESKSKRLG.

It belongs to the bacterial ribosomal protein bL27 family.

The protein is Large ribosomal subunit protein bL27 of Opitutus terrae (strain DSM 11246 / JCM 15787 / PB90-1).